Here is a 384-residue protein sequence, read N- to C-terminus: Formate-dependent phosphoribosylglycinamide formyltransferase (384 aa).

Residues 14 to 15 (EL) and Glu-74 contribute to the N(1)-(5-phospho-beta-D-ribosyl)glycinamide site. ATP-binding positions include Arg-106, Lys-147, 152 to 157 (SSGKGQ), 187 to 190 (EEFI), and Glu-195. An ATP-grasp domain is found at 111-300 (RLAAETLHLP…EFALHVRAVL (190 aa)). Glu-259 and Glu-271 together coordinate Mg(2+). N(1)-(5-phospho-beta-D-ribosyl)glycinamide contacts are provided by residues Asp-278, Lys-348, and 355 to 356 (RR).

Belongs to the PurK/PurT family. In terms of assembly, homodimer.

The catalysed reaction is N(1)-(5-phospho-beta-D-ribosyl)glycinamide + formate + ATP = N(2)-formyl-N(1)-(5-phospho-beta-D-ribosyl)glycinamide + ADP + phosphate + H(+). Its pathway is purine metabolism; IMP biosynthesis via de novo pathway; N(2)-formyl-N(1)-(5-phospho-D-ribosyl)glycinamide from N(1)-(5-phospho-D-ribosyl)glycinamide (formate route): step 1/1. Involved in the de novo purine biosynthesis. Catalyzes the transfer of formate to 5-phospho-ribosyl-glycinamide (GAR), producing 5-phospho-ribosyl-N-formylglycinamide (FGAR). Formate is provided by PurU via hydrolysis of 10-formyl-tetrahydrofolate. This chain is Formate-dependent phosphoribosylglycinamide formyltransferase, found in Bacillus velezensis (strain DSM 23117 / BGSC 10A6 / LMG 26770 / FZB42) (Bacillus amyloliquefaciens subsp. plantarum).